Consider the following 306-residue polypeptide: Cell division protein ZipA (306 aa).

The Periplasmic segment spans residues 1-6 (MENLQL). The chain crosses the membrane as a helical span at residues 7–27 (VLLLIGAIAIIAVLVHGFWSI). Residues 28-306 (RKQQPKGYKQ…NYIQRIRAQA (279 aa)) are Cytoplasmic-facing.

This sequence belongs to the ZipA family. Interacts with FtsZ via their C-terminal domains.

The protein resides in the cell inner membrane. Essential cell division protein that stabilizes the FtsZ protofilaments by cross-linking them and that serves as a cytoplasmic membrane anchor for the Z ring. Also required for the recruitment to the septal ring of downstream cell division proteins. In Shewanella halifaxensis (strain HAW-EB4), this protein is Cell division protein ZipA.